An 843-amino-acid polypeptide reads, in one-letter code: Neuroligin-1 (843 aa).

A signal peptide spans 1–45 (MALPRCMWPNYVWRAMMACVVHRGSGAPLTLCLLGCLLQTFHVLS). Over 46 to 697 (QKLDDVDPLV…DQRDYSTELS (652 aa)) the chain is Extracellular. A glycan (N-linked (GlcNAc...) (complex) asparagine) is linked at Asn-109. 2 disulfide bridges follow: Cys-117-Cys-153 and Cys-172-Cys-181. 2 N-linked (GlcNAc...) (complex) asparagine glycosylation sites follow: Asn-303 and Asn-343. 2 cysteine pairs are disulfide-bonded: Cys-342-Cys-353 and Cys-512-Cys-546. Residue Asn-547 is glycosylated (N-linked (GlcNAc...) asparagine). Residues 647 to 688 (TKVPSTDITLRPTRKNSTPVTSAFPTAKQDDPKQQPSPFSVD) are disordered. Over residues 661 to 670 (KNSTPVTSAF) the composition is skewed to polar residues. O-linked (GalNAc...) serine glycans are attached at residues Ser-683 and Ser-686. A helical membrane pass occupies residues 698–718 (VTIAVGASLLFLNILAFAALY). At 719–843 (YKKDKRRHDV…HPHSHSTTRV (125 aa)) the chain is on the cytoplasmic side. The interval 822–843 (GGQNNTLPHPHPHPHSHSTTRV) is disordered. Over residues 831 to 843 (PHPHPHSHSTTRV) the composition is skewed to basic residues.

The protein belongs to the type-B carboxylesterase/lipase family. In terms of assembly, interacts with neurexins NRXN1, NRXN2 and NRXN3. Interaction with neurexins is mediated by heparan sulfate glycan modification on neurexin. Interacts with NLGN3. Interacts (via its C-terminus) with DLG4/PSD-95 (via PDZ domain 3). Interacts with GOPC. Interacts with AIP1 and PDZRN3. The N-terminus is blocked. As to expression, expressed in brain, almost exclusively in neurons, and spinal cord. Detected in pancreas islet beta cells.

It is found in the cell membrane. It localises to the postsynaptic density. Its subcellular location is the synaptic cleft. The protein localises to the synaptic cell membrane. In terms of biological role, cell surface protein involved in cell-cell-interactions via its interactions with neurexin family members. Plays a role in synapse function and synaptic signal transmission, and probably mediates its effects by recruiting and clustering other synaptic proteins. May promote the initial formation of synapses, but is not essential for this. In vitro, triggers the de novo formation of presynaptic structures. May be involved in specification of excitatory synapses. Required to maintain wakefulness quality and normal synchrony of cerebral cortex activity during wakefulness and sleep. The protein is involved in nervous system development. The polypeptide is Neuroligin-1 (Nlgn1) (Rattus norvegicus (Rat)).